A 355-amino-acid polypeptide reads, in one-letter code: DNA polymerase IV (355 aa).

The UmuC domain occupies 6–187 (IIHVDMDAFY…LPVGKIHGVG (182 aa)). Positions 10 and 105 each coordinate Mg(2+). Residue E106 is part of the active site.

It belongs to the DNA polymerase type-Y family. As to quaternary structure, monomer. The cofactor is Mg(2+).

Its subcellular location is the cytoplasm. It catalyses the reaction DNA(n) + a 2'-deoxyribonucleoside 5'-triphosphate = DNA(n+1) + diphosphate. Functionally, poorly processive, error-prone DNA polymerase involved in untargeted mutagenesis. Copies undamaged DNA at stalled replication forks, which arise in vivo from mismatched or misaligned primer ends. These misaligned primers can be extended by PolIV. Exhibits no 3'-5' exonuclease (proofreading) activity. May be involved in translesional synthesis, in conjunction with the beta clamp from PolIII. The sequence is that of DNA polymerase IV from Alkalilimnicola ehrlichii (strain ATCC BAA-1101 / DSM 17681 / MLHE-1).